Consider the following 851-residue polypeptide: DNA mismatch repair protein MutS (851 aa).

Residue 602 to 609 (GPNMSGKS) participates in ATP binding.

This sequence belongs to the DNA mismatch repair MutS family.

Its function is as follows. This protein is involved in the repair of mismatches in DNA. It is possible that it carries out the mismatch recognition step. This protein has a weak ATPase activity. The polypeptide is DNA mismatch repair protein MutS (Streptococcus pyogenes serotype M2 (strain MGAS10270)).